The sequence spans 372 residues: Chaperone protein DnaJ (372 aa).

The J domain occupies 5–69; that stretch reads DYYEVLGVSK…DKRKQYDQFG (65 aa). The segment at 139–221 adopts a CR-type zinc-finger fold; the sequence is GVDKIIELDL…CKGKGKYLER (83 aa). 8 residues coordinate Zn(2+): cysteine 152, cysteine 155, cysteine 169, cysteine 172, cysteine 195, cysteine 198, cysteine 209, and cysteine 212. 4 CXXCXGXG motif repeats span residues 152-159, 169-176, 195-202, and 209-216; these read CSACFGSG, CNNCHGTG, CNVCNGAG, and CKNCKGKG.

The protein belongs to the DnaJ family. As to quaternary structure, homodimer. It depends on Zn(2+) as a cofactor.

It localises to the cytoplasm. Participates actively in the response to hyperosmotic and heat shock by preventing the aggregation of stress-denatured proteins and by disaggregating proteins, also in an autonomous, DnaK-independent fashion. Unfolded proteins bind initially to DnaJ; upon interaction with the DnaJ-bound protein, DnaK hydrolyzes its bound ATP, resulting in the formation of a stable complex. GrpE releases ADP from DnaK; ATP binding to DnaK triggers the release of the substrate protein, thus completing the reaction cycle. Several rounds of ATP-dependent interactions between DnaJ, DnaK and GrpE are required for fully efficient folding. Also involved, together with DnaK and GrpE, in the DNA replication of plasmids through activation of initiation proteins. This Mycoplasma capricolum subsp. capricolum (strain California kid / ATCC 27343 / NCTC 10154) protein is Chaperone protein DnaJ.